The following is a 626-amino-acid chain: Bifurcating [FeFe] hydrogenase beta subunit (626 aa).

198–201 (GGGG) serves as a coordination point for NAD(+). Residues Lys-207 and 224-228 (NGDEG) contribute to the FMN site. Asp-229 is a binding site for NAD(+). FMN-binding positions include 312-317 (FVCGEE) and 350-352 (INN). 12 residues coordinate [4Fe-4S] cluster: Cys-485, Cys-488, Cys-491, Cys-531, Cys-578, Cys-581, Cys-584, Cys-588, Cys-608, Cys-611, Cys-614, and Cys-618. 4Fe-4S ferredoxin-type domains lie at 569–598 (KKYV…GERG) and 599–626 (KPYT…IELV).

Belongs to the complex I 51 kDa subunit family. As to quaternary structure, heterotrimer composed of HydA (alpha subunit), HydB (beta subunit) and HydC (gamma subunit). Near neutral and acidic pH conditions favor oligomerization of the heterotrimeric holoenzyme. The cofactor is [2Fe-2S] cluster. It depends on [4Fe-4S] cluster as a cofactor. FMN is required as a cofactor.

It localises to the cytoplasm. It carries out the reaction 2 H2 + 2 oxidized [2Fe-2S]-[ferredoxin] + NAD(+) = 2 reduced [2Fe-2S]-[ferredoxin] + NADH + 3 H(+). Its function is as follows. Catalyzes the oxidation of the physiological electron carriers NADH and reduced ferredoxin, coupled to the production of H(2). Acts as a bifurcating [FeFe] hydrogenase, which uses the exergonic oxidation of reduced ferredoxin to drive the unfavorable oxidation of NADH to produce H(2). The beta subunit contains flavin- and NAD-binding sites and is potentially the site for NADH oxidation, with the subsequent shuttling of electrons to the alpha subunit. This Thermotoga maritima (strain ATCC 43589 / DSM 3109 / JCM 10099 / NBRC 100826 / MSB8) protein is Bifurcating [FeFe] hydrogenase beta subunit.